A 343-amino-acid chain; its full sequence is Putative dihydroflavonol 4-reductase (343 aa).

Tyr-150 contacts NADP(+).

Belongs to the NAD(P)-dependent epimerase/dehydratase family. Dihydroflavonol-4-reductase subfamily.

The catalysed reaction is a (2R,3S,4S)-leucoanthocyanidin + NADP(+) = a (2R,3R)-dihydroflavonol + NADPH + H(+). Its pathway is secondary metabolite biosynthesis; flavonoid biosynthesis. In Synechocystis sp. (strain ATCC 27184 / PCC 6803 / Kazusa), this protein is Putative dihydroflavonol 4-reductase (dfrA).